The following is a 777-amino-acid chain: E3 UFM1-protein ligase 1 homolog (777 aa).

The span at 396–417 shows a compositional bias: basic and acidic residues; the sequence is MKHQDPMDRDSAVGEGKADKRE. A disordered region spans residues 396-470; that stretch reads MKHQDPMDRD…PSGGKKGGKD (75 aa).

Belongs to the UFL1 family.

Functionally, E3 UFM1-protein ligase that mediates ufmylation of target proteins. This is E3 UFM1-protein ligase 1 homolog from Aedes aegypti (Yellowfever mosquito).